A 559-amino-acid chain; its full sequence is uncharacterized protein (559 aa).

2 disordered regions span residues 315-360 (TDDA…ERDI) and 454-559 (DKID…STEN). Residues 320–329 (NENSDNSMNT) show a composition bias toward polar residues. The segment covering 348–357 (DNNDDSDDSE) has biased composition (acidic residues). Residues 433–495 (ELKIQEMEKI…KRRQKRSQRS (63 aa)) adopt a coiled-coil conformation. Over residues 454–501 (DKIDMDQIKSEMSRRRDESNKRRDEKRKDREEKRRQKRSQRSDTRKQG) the composition is skewed to basic and acidic residues. Low complexity predominate over residues 507–527 (SDEATSDQTQSTDSNNTTQTA).

The protein localises to the virion. This is an uncharacterized protein from Acanthamoeba polyphaga mimivirus (APMV).